We begin with the raw amino-acid sequence, 142 residues long: Transcription antitermination protein NusB (142 aa).

It belongs to the NusB family.

Involved in transcription antitermination. Required for transcription of ribosomal RNA (rRNA) genes. Binds specifically to the boxA antiterminator sequence of the ribosomal RNA (rrn) operons. The chain is Transcription antitermination protein NusB from Thermotoga petrophila (strain ATCC BAA-488 / DSM 13995 / JCM 10881 / RKU-1).